The following is a 163-amino-acid chain: Large ribosomal subunit protein uL10 (163 aa).

This sequence belongs to the universal ribosomal protein uL10 family. Part of the ribosomal stalk of the 50S ribosomal subunit. The N-terminus interacts with L11 and the large rRNA to form the base of the stalk. The C-terminus forms an elongated spine to which L12 dimers bind in a sequential fashion forming a multimeric L10(L12)X complex.

Forms part of the ribosomal stalk, playing a central role in the interaction of the ribosome with GTP-bound translation factors. This Haemophilus ducreyi (strain 35000HP / ATCC 700724) protein is Large ribosomal subunit protein uL10.